A 449-amino-acid chain; its full sequence is Probable phosphoglucosamine mutase (449 aa).

The active-site Phosphoserine intermediate is the Ser101. The Mg(2+) site is built by Ser101, Asp239, Asp241, and Asp243. Ser101 carries the post-translational modification Phosphoserine.

This sequence belongs to the phosphohexose mutase family. Mg(2+) serves as cofactor. Activated by phosphorylation.

The catalysed reaction is alpha-D-glucosamine 1-phosphate = D-glucosamine 6-phosphate. Its function is as follows. Catalyzes the conversion of glucosamine-6-phosphate to glucosamine-1-phosphate. This Methanothermobacter thermautotrophicus (strain ATCC 29096 / DSM 1053 / JCM 10044 / NBRC 100330 / Delta H) (Methanobacterium thermoautotrophicum) protein is Probable phosphoglucosamine mutase.